A 582-amino-acid polypeptide reads, in one-letter code: Threonine--tRNA ligase (582 aa).

A catalytic region spans residues aspartate 185–proline 478. Positions 278, 329, and 455 each coordinate Zn(2+).

It belongs to the class-II aminoacyl-tRNA synthetase family. In terms of assembly, homodimer. Zn(2+) is required as a cofactor.

It is found in the cytoplasm. The enzyme catalyses tRNA(Thr) + L-threonine + ATP = L-threonyl-tRNA(Thr) + AMP + diphosphate + H(+). Catalyzes the attachment of threonine to tRNA(Thr) in a two-step reaction: L-threonine is first activated by ATP to form Thr-AMP and then transferred to the acceptor end of tRNA(Thr). Also edits incorrectly charged L-seryl-tRNA(Thr). This Dehalococcoides mccartyi (strain ATCC BAA-2266 / KCTC 15142 / 195) (Dehalococcoides ethenogenes (strain 195)) protein is Threonine--tRNA ligase.